Here is a 302-residue protein sequence, read N- to C-terminus: MRFKGLDLNLLVALDALMIERNLTAAARSINLSQPAMSAAVRRLRSYFRDELFTMRGREFVPTPRAEDLAPAIREALQHIRLNIIPWDKFTPDQSDRHFRVSLCDFVTVVLFQKILERLAREAPGISFDLLPLTDNPDELLRRGDVDFLISPPLFMSSAHPKIDLFQERLTCVGCSNNKQLEEALTAEEYSSMGHAVVRFGRTQQPTIEDCFLQEHGLKRRVEVVVSSFSMIPAALMGTDRIATVPLRLVGLFEDTIPLRMTAPPIALPTFTEAVQWPVLHDKDPANIWMRDIMVQEAARLP.

One can recognise an HTH lysR-type domain in the interval 6 to 63 (LDLNLLVALDALMIERNLTAAARSINLSQPAMSAAVRRLRSYFRDELFTMRGREFVPT). A DNA-binding region (H-T-H motif) is located at residues 23–42 (LTAAARSINLSQPAMSAAVR).

The protein belongs to the LysR transcriptional regulatory family.

In terms of biological role, nodD regulates the expression of the nodABCFE genes which encode other nodulation proteins. NodD is also a negative regulator of its own expression. Binds flavonoids as inducers. The protein is Nodulation protein D 3 (nodD3) of Rhizobium leguminosarum bv. phaseoli.